Consider the following 353-residue polypeptide: MATLTSSICSKPKASVFDPHKSSFHGVPIATQARLSPVKSTPVNLAVTAAAMPYDLRSFKFEPIKESIVSREMTRRYMMDMITYADTDVVVVGAGSAGLSCAYELSKNPSVQVAIIEQSVSPGGGAWLGGQLFSSMVVRKPAHRFLDELGLEYDEQDNYVVIKHAALFTSTIMSKLLARPNVKLFNAVAAEDLIIKEGKVGGVVTNWALVSMNHDTQSCMDPNVMEAKVVVSSCGHDGPFGATGVKRLRSVGMIDSVPGMKALDMNTAEDEIVRLTREVVPGMIVTGMEVAEIDGSPRMGPTFGAMMISGQKAAHLALKSLGLPNALDGTYIGNLHPELVLAAAADAAEIAEA.

A chloroplast-targeting transit peptide spans 1 to 48 (MATLTSSICSKPKASVFDPHKSSFHGVPIATQARLSPVKSTPVNLAVT). Substrate is bound by residues Ala97, 117 to 118 (EQ), Gly125, and Ala190. The residue at position 219 (Cys219) is a 2,3-didehydroalanine (Cys). Residues Asp221, His236, Met288, and 298–300 (RMG) each bind substrate.

The protein belongs to the THI4 family. As to quaternary structure, homooctamer. It depends on Fe cation as a cofactor. Post-translationally, during the catalytic reaction, a sulfide is transferred from Cys-219 to a reaction intermediate, generating a dehydroalanine residue.

Its subcellular location is the plastid. It is found in the chloroplast. The catalysed reaction is [ADP-thiazole synthase]-L-cysteine + glycine + NAD(+) = [ADP-thiazole synthase]-dehydroalanine + ADP-5-ethyl-4-methylthiazole-2-carboxylate + nicotinamide + 3 H2O + 2 H(+). Functionally, involved in biosynthesis of the thiamine precursor thiazole. Catalyzes the conversion of NAD and glycine to adenosine diphosphate 5-(2-hydroxyethyl)-4-methylthiazole-2-carboxylic acid (ADT), an adenylated thiazole intermediate. The reaction includes an iron-dependent sulfide transfer from a conserved cysteine residue of the protein to a thiazole intermediate. The enzyme can only undergo a single turnover, which suggests it is a suicide enzyme. May have additional roles in adaptation to various stress conditions and in DNA damage tolerance. The polypeptide is Thiamine thiazole synthase 1, chloroplastic (Vitis vinifera (Grape)).